The sequence spans 238 residues: Ion-translocating oxidoreductase complex subunit E (238 aa).

5 helical membrane passes run Leu41–Val61, Leu71–Ala91, Glu95–Gly115, Ser130–Leu150, and Gly184–Leu204.

Belongs to the NqrDE/RnfAE family. As to quaternary structure, the complex is composed of six subunits: RnfA, RnfB, RnfC, RnfD, RnfE and RnfG.

Its subcellular location is the cell inner membrane. Functionally, part of a membrane-bound complex that couples electron transfer with translocation of ions across the membrane. The protein is Ion-translocating oxidoreductase complex subunit E of Pseudomonas aeruginosa (strain UCBPP-PA14).